The sequence spans 271 residues: Formamidopyrimidine-DNA glycosylase (271 aa).

Residue P2 is the Schiff-base intermediate with DNA of the active site. The active-site Proton donor is E3. K56 (proton donor; for beta-elimination activity) is an active-site residue. DNA is bound by residues H89, R107, and R151. The segment at 236 to 270 (MVYARQGQPCRVCATPIKSLRQGQRSTFYCPHCQK) adopts an FPG-type zinc-finger fold. R260 (proton donor; for delta-elimination activity) is an active-site residue.

The protein belongs to the FPG family. In terms of assembly, monomer. Zn(2+) is required as a cofactor.

It carries out the reaction Hydrolysis of DNA containing ring-opened 7-methylguanine residues, releasing 2,6-diamino-4-hydroxy-5-(N-methyl)formamidopyrimidine.. It catalyses the reaction 2'-deoxyribonucleotide-(2'-deoxyribose 5'-phosphate)-2'-deoxyribonucleotide-DNA = a 3'-end 2'-deoxyribonucleotide-(2,3-dehydro-2,3-deoxyribose 5'-phosphate)-DNA + a 5'-end 5'-phospho-2'-deoxyribonucleoside-DNA + H(+). Its function is as follows. Involved in base excision repair of DNA damaged by oxidation or by mutagenic agents. Acts as a DNA glycosylase that recognizes and removes damaged bases. Has a preference for oxidized purines, such as 7,8-dihydro-8-oxoguanine (8-oxoG). Has AP (apurinic/apyrimidinic) lyase activity and introduces nicks in the DNA strand. Cleaves the DNA backbone by beta-delta elimination to generate a single-strand break at the site of the removed base with both 3'- and 5'-phosphates. The chain is Formamidopyrimidine-DNA glycosylase from Albidiferax ferrireducens (strain ATCC BAA-621 / DSM 15236 / T118) (Rhodoferax ferrireducens).